We begin with the raw amino-acid sequence, 96 residues long: MARITEAEVRHVAGLARLAITDEEVTHFTEQLTKILEFAEQLDELDTTGVEPTTHALDLKNVLRKDEVRPSLPREEVERMAPDWENGQVRVPAVFE.

The protein belongs to the GatC family. Heterotrimer of A, B and C subunits.

The catalysed reaction is L-glutamyl-tRNA(Gln) + L-glutamine + ATP + H2O = L-glutaminyl-tRNA(Gln) + L-glutamate + ADP + phosphate + H(+). It catalyses the reaction L-aspartyl-tRNA(Asn) + L-glutamine + ATP + H2O = L-asparaginyl-tRNA(Asn) + L-glutamate + ADP + phosphate + 2 H(+). Functionally, allows the formation of correctly charged Asn-tRNA(Asn) or Gln-tRNA(Gln) through the transamidation of misacylated Asp-tRNA(Asn) or Glu-tRNA(Gln) in organisms which lack either or both of asparaginyl-tRNA or glutaminyl-tRNA synthetases. The reaction takes place in the presence of glutamine and ATP through an activated phospho-Asp-tRNA(Asn) or phospho-Glu-tRNA(Gln). This Exiguobacterium sp. (strain ATCC BAA-1283 / AT1b) protein is Aspartyl/glutamyl-tRNA(Asn/Gln) amidotransferase subunit C.